The following is a 400-amino-acid chain: MARIFVVSEYVGANQNSTGYYWEKIIGKMQREFGGLTVIFPLTAGETPPVVSPSVDQECFKFPRSNKNRLLSRGLAQIFQAFLFSVKLTSRARRGDVVLSGTNPALLLMTFPLLRYALGFKWVLLVHDVFPENLVPAGVLKKDSIAYRLLRRLFSFIYSSADRLVVIGRDMEALMKEKVNDPRSLVFISNWACEKEVFPVPREDAPFINIPEWKGKRVFQFFGNVGRLQGIENILSAIQLVKNEKAAFAFIGDGALVDSVKKHALEDQCARLRYFGRLPLAEKNFGLAACDVALVTLEEGMFGLGVPSKAYFSMAADKPILAVMEKGAEISRIIDETGIGWNCPPNDPVALARLIDEICELDLSSLGGVPRSVLQQNYSEYISLEKFAACVRPLLSESKI.

This sequence belongs to the glycosyltransferase group 1 family. Glycosyltransferase 4 subfamily.

The protein operates within bacterial outer membrane biogenesis; LPS O-antigen biosynthesis. This is Probable glycosyltransferase WbjE (wbjE) from Pseudomonas aeruginosa.